The sequence spans 495 residues: Geraniol 8-hydroxylase (495 aa).

The chain crosses the membrane as a helical span at residues 5 to 25; sequence FLTIAIGFLFTITLYQALNFF. A heme-binding site is contributed by Cys-438.

This sequence belongs to the cytochrome P450 family. Requires heme as cofactor. Expressed in leaves, stems and roots.

It is found in the endoplasmic reticulum membrane. The enzyme catalyses (2E)-geraniol + reduced [NADPH--hemoprotein reductase] + O2 = (6E)-8-hydroxygeraniol + oxidized [NADPH--hemoprotein reductase] + H2O + H(+). Functionally, hydroxylase involved in the biosynthesis of hydroxygeraniol, a precursor of the iridoid monoterpenoid swertiamarin. The polypeptide is Geraniol 8-hydroxylase (CYP76B10) (Swertia mussotii (Felwort)).